Consider the following 384-residue polypeptide: Ribosomal RNA large subunit methyltransferase G (384 aa).

This sequence belongs to the methyltransferase superfamily. RlmG family.

The protein resides in the cytoplasm. It carries out the reaction guanosine(1835) in 23S rRNA + S-adenosyl-L-methionine = N(2)-methylguanosine(1835) in 23S rRNA + S-adenosyl-L-homocysteine + H(+). Specifically methylates the guanine in position 1835 (m2G1835) of 23S rRNA. This chain is Ribosomal RNA large subunit methyltransferase G, found in Streptomyces griseus subsp. griseus (strain JCM 4626 / CBS 651.72 / NBRC 13350 / KCC S-0626 / ISP 5235).